A 2569-amino-acid polypeptide reads, in one-letter code: Highly reducing polyketide synthase pks5 (2569 aa).

The disordered stretch occupies residues 1–25 (MVVKFANGVRNRGNGDEGQRGTQRP). Positions 27–452 (STPIAIVGMS…GTNVHVIMEA (426 aa)) constitute a Ketosynthase family 3 (KS3) domain. Active-site for beta-ketoacyl synthase activity residues include Cys-200, His-335, and His-375. The malonyl-CoA:ACP transacylase (MAT) domain stretch occupies residues 572-892 (IFNGQGAQWY…PYLSCLRRNI (321 aa)). Residues 960 to 1097 (HELLGSSVPG…GYVSAEDSSK (138 aa)) form an N-terminal hotdog fold region. A dehydratase (DH) domain region spans residues 960–1268 (HELLGSSVPG…LRLQKIQAED (309 aa)). In terms of domain architecture, PKS/mFAS DH spans 960 to 1270 (HELLGSSVPG…LQKIQAEDDN (311 aa)). His-992 acts as the Proton acceptor; for dehydratase activity in catalysis. A C-terminal hotdog fold region spans residues 1117–1270 (RVRHVRPDAM…LQKIQAEDDN (154 aa)). Residue Asp-1179 is the Proton donor; for dehydratase activity of the active site. Residues 1457–1567 (LEVGAGTGGA…RKLLKPKGKL (111 aa)) are methyltransferase (CMet) domain. The interval 1855-2170 (DLLNKIEFLE…SGTHMGKIVL (316 aa)) is enoyl reductase (ER) domain. Residues 2195-2371 (THLIVGGLRG…AISINLGPVD (177 aa)) are ketoreductase (KR) domain. The Carrier domain occupies 2485–2562 (AARKLVSELI…DFAALVASRS (78 aa)). Ser-2522 is modified (O-(pantetheine 4'-phosphoryl)serine).

In terms of biological role, highly reducing polyketide synthase; part of the gene cluster that mediates the biosynthesis of abscisic acid (ABA), a phytohormone that acts antagonistically toward salicylic acid (SA), jasmonic acid (JA) and ethylene (ETH) signaling, to impede plant defense responses. The first step of the pathway catalyzes the reaction from farnesyl diphosphate to alpha-ionylideneethane performed by the alpha-ionylideneethane synthase abl3 via a three-step reaction mechanism involving 2 neutral intermediates, beta-farnesene and allofarnesene. The cytochrome P450 monooxygenase abl1 might then be involved in the conversion of alpha-ionylideneethane to alpha-ionylideneacetic acid. Alpha-ionylideneacetic acid is further converted to abscisic acid in 2 steps involving the cytochrome P450 monooxygenase abl2 and the short-chain dehydrogenase/reductase abl4, via the intermediates 1'-deoxy-ABA or 1',4'-trans-diol-ABA, depending on the order of action of these 2 enzymes. Abl2 is responsible for the hydroxylation of carbon atom C-1' and abl4 might be involved in the oxidation of the C-4' carbon atom. Pks5 is clearly not involved in the production of ABA. Nonetheless, the possibility cannot be excluded that pks5 may modify ABA into another compound. It also cannot be excluded the possibility that pks5 also has a function completely independent of ABA synthesis. Pks5 is not required for pathogenicity on B.napus cotyledon. This chain is Highly reducing polyketide synthase pks5, found in Leptosphaeria maculans (strain JN3 / isolate v23.1.3 / race Av1-4-5-6-7-8) (Blackleg fungus).